The following is a 215-amino-acid chain: Adenylate kinase (215 aa).

Residue 10 to 15 (GAGKGT) coordinates ATP. The interval 30-59 (STGDMLRAAVKAGSPLGQQVKGVMDSGGLV) is NMP. AMP-binding positions include Thr-31, Arg-36, 57 to 59 (GLV), 85 to 88 (GFPR), and Gln-92. An LID region spans residues 122–159 (GRRVHPASGRVYHTEHNPPKVAGKDDVTGEDLIQREDD). ATP contacts are provided by residues Arg-123 and 132–133 (VY). AMP-binding residues include Arg-156 and Arg-167. ATP is bound at residue Gly-201.

This sequence belongs to the adenylate kinase family. Monomer.

Its subcellular location is the cytoplasm. It catalyses the reaction AMP + ATP = 2 ADP. It participates in purine metabolism; AMP biosynthesis via salvage pathway; AMP from ADP: step 1/1. Its function is as follows. Catalyzes the reversible transfer of the terminal phosphate group between ATP and AMP. Plays an important role in cellular energy homeostasis and in adenine nucleotide metabolism. This is Adenylate kinase from Pseudomonas paraeruginosa (strain DSM 24068 / PA7) (Pseudomonas aeruginosa (strain PA7)).